We begin with the raw amino-acid sequence, 165 residues long: AIG2-like protein A (165 aa).

Tyr-15 to Asp-20 lines the substrate pocket. The Proton acceptor role is filled by Glu-83.

It belongs to the gamma-glutamylcyclotransferase family. Expressed only in seeds.

Functionally, putative gamma-glutamylcyclotransferase. The sequence is that of AIG2-like protein A from Arabidopsis thaliana (Mouse-ear cress).